A 338-amino-acid polypeptide reads, in one-letter code: UPF0252 protein PF1496 (338 aa).

A helical transmembrane segment spans residues 100–120 (ILSMLFLVFILFPAFTSHIWS).

This sequence belongs to the UPF0252 family.

It localises to the membrane. This is UPF0252 protein PF1496 from Pyrococcus furiosus (strain ATCC 43587 / DSM 3638 / JCM 8422 / Vc1).